Reading from the N-terminus, the 144-residue chain is Giant hemoglobin AIII chain (144 aa).

In terms of domain architecture, Globin spans Glu-2–Asn-144. His-95 serves as a coordination point for heme b.

Belongs to the globin family. As to quaternary structure, giant hemoglobin is composed of four heme-containing chains (AI to AIV), and two linker chains (AV and AVI).

This is Giant hemoglobin AIII chain from Lamellibrachia sp. (Deep-sea giant tube worm).